The primary structure comprises 378 residues: Odorant receptor 45a (378 aa).

Over 1-30 (MDASYFAVQRRALEIVGFDPSTPQLSLKHP) the chain is Cytoplasmic. Residues 31–51 (IWAGILILSLISHNWPMVVYA) form a helical membrane-spanning segment. The Extracellular portion of the chain corresponds to 52-129 (LQDLSDLTRL…RYVARSFRNA (78 aa)). A helical transmembrane segment spans residues 130 to 150 (AYGVICASAIAPMLLGLWGYV). Topologically, residues 151 to 173 (ETGVFTPTTPMEFNFWLDERKPH) are cytoplasmic. The chain crosses the membrane as a helical span at residues 174–194 (FYWPIYVWGVLGVAAAAWLAI). The Extracellular segment spans residues 195–197 (ATD). Residues 198 to 218 (TLFSWLTHNVVIQFQLLELVL) traverse the membrane as a helical segment. The Cytoplasmic segment spans residues 219–249 (EEKDLNGGDSRLTGFVSRHRIALDLAKELSS). The helical transmembrane segment at 250-270 (IFGEIVFVKYMLSYLQLCMLA) threads the bilayer. Residues 271-285 (FRFSRSGWSAQVPFR) are Extracellular-facing. A helical membrane pass occupies residues 286–306 (ATFLVAIIIQLSSYCYGGEYI). Residues 307–342 (KQQSLAIAQAVYGQINWPEMTPKKRRLWQMVIMRAQ) lie on the Cytoplasmic side of the membrane. A helical transmembrane segment spans residues 343-363 (RPAKIFGFMFVVDLPLLLWVI). At 364-378 (RTAGSFLAMLRTFER) the chain is on the extracellular side.

The protein belongs to the insect chemoreceptor superfamily. Heteromeric odorant receptor channel (TC 1.A.69) family. Or1a subfamily. In terms of assembly, interacts with Orco. Complexes exist early in the endomembrane system in olfactory sensory neurons (OSNs), coupling these complexes to the conserved ciliary trafficking pathway.

The protein localises to the cell membrane. Functionally, odorant receptor which mediates acceptance or avoidance behavior, depending on its substrates. The odorant receptor repertoire encodes a large collection of odor stimuli that vary widely in identity, intensity, and duration. May form a complex with Orco to form odorant-sensing units, providing sensitive and prolonged odorant signaling and calcium permeability. Involved in the behavioral responses to hexanol, pentyl acetate, benzyl acetate, and 2-heptanone. This is Odorant receptor 45a (Or45a) from Drosophila melanogaster (Fruit fly).